Consider the following 200-residue polypeptide: Mpv17-like protein 2 (200 aa).

The next 3 helical transmembrane spans lie at 24–40, 63–83, and 102–122; these read ALLL…MAAG, ASMF…YLWL, and VLVD…LGLG.

The protein belongs to the peroxisomal membrane protein PXMP2/4 family. Interacts with the large mitochondrial ribosomal subunit.

The protein resides in the membrane. Its subcellular location is the mitochondrion inner membrane. Functionally, required for the assembly and stability of the mitochondrial ribosome. Is a positive regulator of mitochondrial protein synthesis. The polypeptide is Mpv17-like protein 2 (Mpv17l2) (Mus musculus (Mouse)).